Consider the following 295-residue polypeptide: 4-hydroxy-tetrahydrodipicolinate synthase (295 aa).

Threonine 47 is a pyruvate binding site. The active-site Proton donor/acceptor is tyrosine 135. Residue lysine 163 is the Schiff-base intermediate with substrate of the active site. Isoleucine 206 provides a ligand contact to pyruvate.

Belongs to the DapA family. As to quaternary structure, homodimer.

Its subcellular location is the cytoplasm. The enzyme catalyses L-aspartate 4-semialdehyde + pyruvate = (2S,4S)-4-hydroxy-2,3,4,5-tetrahydrodipicolinate + H2O + H(+). It participates in amino-acid biosynthesis; L-lysine biosynthesis via DAP pathway; (S)-tetrahydrodipicolinate from L-aspartate: step 3/4. With respect to regulation, is not feedback inhibited by lysine. Functionally, catalyzes the condensation of (S)-aspartate-beta-semialdehyde [(S)-ASA] and pyruvate to 4-hydroxy-tetrahydrodipicolinate (HTPA). This chain is 4-hydroxy-tetrahydrodipicolinate synthase, found in Staphylococcus aureus (strain COL).